The following is a 1216-amino-acid chain: DNA-directed RNA polymerase subunit beta (1216 aa).

The tract at residues 1185–1216 (EEKQELPSQEYESLNLDQELKTASENVSESEF) is disordered. A compositionally biased stretch (polar residues) spans 1190–1216 (LPSQEYESLNLDQELKTASENVSESEF).

The protein belongs to the RNA polymerase beta chain family. As to quaternary structure, the RNAP catalytic core consists of 2 alpha, 1 beta, 1 beta' and 1 omega subunit. When a sigma factor is associated with the core the holoenzyme is formed, which can initiate transcription.

It catalyses the reaction RNA(n) + a ribonucleoside 5'-triphosphate = RNA(n+1) + diphosphate. In terms of biological role, DNA-dependent RNA polymerase catalyzes the transcription of DNA into RNA using the four ribonucleoside triphosphates as substrates. This Mycoplasmopsis pulmonis (strain UAB CTIP) (Mycoplasma pulmonis) protein is DNA-directed RNA polymerase subunit beta.